A 153-amino-acid chain; its full sequence is Histone H2B.8 (153 aa).

Composition is skewed to basic and acidic residues over residues 1–28 (MAPK…EKAP) and 36–53 (EKRL…EGKK). Positions 1 to 61 (MAPKAEKKPA…KKAGRKKAKK (61 aa)) are disordered. An N6-acetyllysine mark is found at lysine 7 and lysine 37. A Glycyl lysine isopeptide (Lys-Gly) (interchain with G-Cter in ubiquitin) cross-link involves residue lysine 149.

The protein belongs to the histone H2B family. The nucleosome is a histone octamer containing two molecules each of H2A, H2B, H3 and H4 assembled in one H3-H4 heterotetramer and two H2A-H2B heterodimers. The octamer wraps approximately 147 bp of DNA. Can be acetylated to form H2BK6ac and H2BK33ac. In terms of processing, monoubiquitinated by BRE1 to form H2BK143ub1 and deubiquitinated by UBP26. Required for heterochromatic histone H3 di- and trimethylation at H3K4me. May give a specific tag for epigenetic transcriptional activation.

Its subcellular location is the nucleus. It localises to the chromosome. Its function is as follows. Core component of nucleosome. Nucleosomes wrap and compact DNA into chromatin, limiting DNA accessibility to the cellular machineries which require DNA as a template. Histones thereby play a central role in transcription regulation, DNA repair, DNA replication and chromosomal stability. DNA accessibility is regulated via a complex set of post-translational modifications of histones, also called histone code, and nucleosome remodeling. The protein is Histone H2B.8 (H2B.8) of Oryza sativa subsp. indica (Rice).